The following is a 489-amino-acid chain: Ribulose bisphosphate carboxylase large chain 2 (489 aa).

2 residues coordinate substrate: Asn-128 and Thr-178. Lys-180 (proton acceptor) is an active-site residue. Lys-182 is a binding site for substrate. Mg(2+) is bound by residues Lys-206, Asp-208, and Glu-209. Lys-206 carries the post-translational modification N6-carboxylysine. His-298 serves as the catalytic Proton acceptor. Substrate is bound by residues Arg-299, His-331, and Ser-383.

It belongs to the RuBisCO large chain family. Type I subfamily. As to quaternary structure, heterohexadecamer of 8 large chains and 8 small chains. Mg(2+) is required as a cofactor.

It carries out the reaction 2 (2R)-3-phosphoglycerate + 2 H(+) = D-ribulose 1,5-bisphosphate + CO2 + H2O. The enzyme catalyses D-ribulose 1,5-bisphosphate + O2 = 2-phosphoglycolate + (2R)-3-phosphoglycerate + 2 H(+). Functionally, ruBisCO catalyzes two reactions: the carboxylation of D-ribulose 1,5-bisphosphate, the primary event in carbon dioxide fixation, as well as the oxidative fragmentation of the pentose substrate. Both reactions occur simultaneously and in competition at the same active site. The chain is Ribulose bisphosphate carboxylase large chain 2 from Nitrobacter winogradskyi (strain ATCC 25391 / DSM 10237 / CIP 104748 / NCIMB 11846 / Nb-255).